A 552-amino-acid polypeptide reads, in one-letter code: Chaperonin GroEL (552 aa).

ATP is bound by residues 30–33, Lys-51, 87–91, Gly-415, and Asp-496; these read TLGP and DGTTT.

Belongs to the chaperonin (HSP60) family. Forms a cylinder of 14 subunits composed of two heptameric rings stacked back-to-back. Interacts with the co-chaperonin GroES.

It is found in the cytoplasm. The enzyme catalyses ATP + H2O + a folded polypeptide = ADP + phosphate + an unfolded polypeptide.. Its function is as follows. Together with its co-chaperonin GroES, plays an essential role in assisting protein folding. The GroEL-GroES system forms a nano-cage that allows encapsulation of the non-native substrate proteins and provides a physical environment optimized to promote and accelerate protein folding. The protein is Chaperonin GroEL of Paramagnetospirillum magneticum (strain ATCC 700264 / AMB-1) (Magnetospirillum magneticum).